The chain runs to 779 residues: Molybdenum cofactor sulfurase (779 aa).

Lys-247 is modified (N6-(pyridoxal phosphate)lysine). Cys-409 is a catalytic residue. The 156-residue stretch at 624-779 folds into the MOSC domain; that stretch reads SQSLGLEGVR…LTCGDVIVVS (156 aa). Ser-732 carries the phosphoserine modification.

Belongs to the class-V pyridoxal-phosphate-dependent aminotransferase family. MOCOS subfamily. The cofactor is pyridoxal 5'-phosphate.

It catalyses the reaction Mo-molybdopterin + L-cysteine + AH2 = thio-Mo-molybdopterin + L-alanine + A + H2O. The protein operates within cofactor biosynthesis; molybdopterin biosynthesis. Functionally, sulfurates the molybdenum cofactor. Sulfation of molybdenum is essential for xanthine dehydrogenase (XDH) and aldehyde oxidase (ADO) enzymes in which molybdenum cofactor is liganded by 1 oxygen and 1 sulfur atom in active form. The sequence is that of Molybdenum cofactor sulfurase from Drosophila mojavensis (Fruit fly).